Consider the following 210-residue polypeptide: Histone H1A (210 aa).

Disordered stretches follow at residues 1-49 (MAEA…VSEQ) and 101-210 (KGSG…PKKK). Low complexity-rich tracts occupy residues 26–45 (KKAA…SGPS) and 129–142 (PLAA…AAAK). Residues 42–113 (SGPSVSEQIV…GASGSFKLNK (72 aa)) form the H15 domain. 2 stretches are compositionally biased toward basic residues: residues 143 to 153 (KTAKSPKKPKK) and 160 to 180 (SPKK…KTAV). Residues 181 to 192 (KPKVAAKSPAKA) show a composition bias toward low complexity. Residues 193–210 (KAAKPKVAKAKKAAPKKK) are compositionally biased toward basic residues.

This sequence belongs to the histone H1/H5 family.

It localises to the nucleus. The protein resides in the chromosome. Functionally, histones H1 are necessary for the condensation of nucleosome chains into higher-order structures. This chain is Histone H1A, found in Xenopus laevis (African clawed frog).